A 575-amino-acid polypeptide reads, in one-letter code: Electron transfer flavoprotein-ubiquinone oxidoreductase, mitochondrial (575 aa).

A mitochondrion-targeting transit peptide spans 1 to 33; the sequence is MQRVLRAAAAGIGHASGHRAPRWGAAAAAARWL. 44–58 contributes to the FAD binding site; sequence VVVVGAGPAGLAAAI. Residues 82–103 lie within the membrane without spanning it; the sequence is VGAHVLSGNVFEPRALDELIPK. Glycine 276 and glycine 277 together coordinate a ubiquinone. An intramembrane segment occupies 343–363; it reads IPNPVFPGGAIIGCSAGFLNV. The [4Fe-4S] cluster site is built by cysteine 520, cysteine 544, cysteine 547, and cysteine 550. In terms of domain architecture, 4Fe-4S ferredoxin-type spans 535–564; sequence QKLHINAQNCLHCKACDIKDPKQNIEWTVP.

Belongs to the ETF-QO/FixC family. The cofactor is [4Fe-4S] cluster. FAD serves as cofactor.

The protein localises to the mitochondrion inner membrane. It carries out the reaction a ubiquinone + reduced [electron-transfer flavoprotein] = a ubiquinol + oxidized [electron-transfer flavoprotein] + H(+). Its function is as follows. Accepts electrons from ETF and reduces ubiquinone. This chain is Electron transfer flavoprotein-ubiquinone oxidoreductase, mitochondrial, found in Oryza sativa subsp. japonica (Rice).